The sequence spans 296 residues: NAD kinase (296 aa).

Catalysis depends on Asp-73, which acts as the Proton acceptor. Residues 73–74 (DG), Lys-78, 151–152 (NE), Arg-178, Asp-180, and 191–196 (TAHAMS) contribute to the NAD(+) site.

This sequence belongs to the NAD kinase family. A divalent metal cation is required as a cofactor.

Its subcellular location is the cytoplasm. The catalysed reaction is NAD(+) + ATP = ADP + NADP(+) + H(+). In terms of biological role, involved in the regulation of the intracellular balance of NAD and NADP, and is a key enzyme in the biosynthesis of NADP. Catalyzes specifically the phosphorylation on 2'-hydroxyl of the adenosine moiety of NAD to yield NADP. The sequence is that of NAD kinase from Francisella tularensis subsp. novicida (strain U112).